The chain runs to 207 residues: 3-isopropylmalate dehydratase small subunit (207 aa).

Belongs to the LeuD family. LeuD type 1 subfamily. As to quaternary structure, heterodimer of LeuC and LeuD.

The enzyme catalyses (2R,3S)-3-isopropylmalate = (2S)-2-isopropylmalate. Its pathway is amino-acid biosynthesis; L-leucine biosynthesis; L-leucine from 3-methyl-2-oxobutanoate: step 2/4. Its function is as follows. Catalyzes the isomerization between 2-isopropylmalate and 3-isopropylmalate, via the formation of 2-isopropylmaleate. The polypeptide is 3-isopropylmalate dehydratase small subunit (Acidithiobacillus ferrooxidans (strain ATCC 23270 / DSM 14882 / CIP 104768 / NCIMB 8455) (Ferrobacillus ferrooxidans (strain ATCC 23270))).